A 156-amino-acid chain; its full sequence is Small ribosomal subunit protein uS7 (156 aa).

Belongs to the universal ribosomal protein uS7 family. As to quaternary structure, part of the 30S ribosomal subunit. Contacts proteins S9 and S11.

Its function is as follows. One of the primary rRNA binding proteins, it binds directly to 16S rRNA where it nucleates assembly of the head domain of the 30S subunit. Is located at the subunit interface close to the decoding center, probably blocks exit of the E-site tRNA. The sequence is that of Small ribosomal subunit protein uS7 from Clavibacter sepedonicus (Clavibacter michiganensis subsp. sepedonicus).